Here is a 137-residue protein sequence, read N- to C-terminus: uncharacterized protein (137 aa).

Positions 4 to 73 (MLTVSEVARK…LEEIADILHL (70 aa)) constitute an HTH merR-type domain. The segment at residues 8–27 (SEVARKLGLNPQTLYFYERI) is a DNA-binding region (H-T-H motif).

This is an uncharacterized protein from Synechocystis sp. (strain ATCC 27184 / PCC 6803 / Kazusa).